The chain runs to 388 residues: Cystathionine gamma-synthase (388 aa).

Residue Lys-208 is modified to N6-(pyridoxal phosphate)lysine.

This sequence belongs to the trans-sulfuration enzymes family. As to quaternary structure, homotetramer. Requires pyridoxal 5'-phosphate as cofactor.

Its subcellular location is the cytoplasm. The catalysed reaction is O-succinyl-L-homoserine + L-cysteine = L,L-cystathionine + succinate + H(+). Functionally, catalyzes the formation of L-cystathionine from O-succinyl-L-homoserine (OSHS) and L-cysteine, via a gamma-replacement reaction. In the absence of thiol, catalyzes gamma-elimination to form 2-oxobutanoate, succinate and ammonia. The chain is Cystathionine gamma-synthase (metB) from Mycobacterium leprae (strain TN).